Consider the following 762-residue polypeptide: MSVPKKRNHGKLPPSTKDVDDPSLKYTKAAPKCEQVAEHWLLQPLPEPESRYSFWVTIVTLLAFAARFYKIWYPKEVVFDEVHFGKFASYYLERSYFFDVHPPFAKMMIAFIGWLCGYDGSFKFDEIGYSYETHPAPYIAYRSFNAILGTLTVPIMFNTLKELNFRAITCAFASLLVAIDTAHVTETRLILLDAILIISIAATMYCYVRFYKCQLRQPFTWSWYIWLHATGLSLSFVISTKYVGVMTYSAIGFAAVVNLWQLLDIKAGLSLRQFMRHFSKRLNGLVLIPFVIYLFWFWVHFTVLNTSGPGDAFMSAEFQETLKDSPLSVDSKTVNYFDIITIKHQDTDAFLHSHLARYPQRYEDGRISSAGQQVTGYTHPDFNNQWEVLPPHGSDVGKGQAVLLNQHIRLRHVATDTYLLAHDVASPFYPTNEEITTVTLEEGDGELYPETLFAFQPLKKSDEGHVLKSKTVSFRLFHVDTSVALWTHNDELLPDWGFQQQEINGNKKVIDPSNNWVVDEIVNLDEVRKVYIPKVVKPLPFLKKWIETQKSMFEHNNKLSSEHPFASEPYSWPGSLSGVSFWTNGDEKKQIYFIGNIIGWWFQVISLAVFVGIIVADLITRHRGYYALNKMTREKLYGPLMFFFVSWCCHYFPFFLMARQKFLHHYLPAHLIACLFSGALWEVIFSDCKSLDLEKDEDISGASYERNPKVYVKPYTVFLVCVSCAVAWFFVYFSPLVYGDVSLSPSEVVSREWFDIELNFSK.

The segment covering 1 to 10 has biased composition (basic residues); the sequence is MSVPKKRNHG. Residues 1–24 form a disordered region; that stretch reads MSVPKKRNHGKLPPSTKDVDDPSL. Residues 1–53 are Lumenal-facing; sequence MSVPKKRNHGKLPPSTKDVDDPSLKYTKAAPKCEQVAEHWLLQPLPEPESRYS. Residues 54–74 form a helical membrane-spanning segment; sequence FWVTIVTLLAFAARFYKIWYP. Residues 75-136 are Cytoplasmic-facing; that stretch reads KEVVFDEVHF…IGYSYETHPA (62 aa). A helical transmembrane segment spans residues 137-157; that stretch reads PYIAYRSFNAILGTLTVPIMF. The Lumenal portion of the chain corresponds to 158–166; sequence NTLKELNFR. Residues 167-187 traverse the membrane as a helical segment; sequence AITCAFASLLVAIDTAHVTET. Residues 188–189 are Cytoplasmic-facing; sequence RL. The helical transmembrane segment at 190–210 threads the bilayer; it reads ILLDAILIISIAATMYCYVRF. Residues 211–217 are Lumenal-facing; it reads YKCQLRQ. A helical membrane pass occupies residues 218–238; sequence PFTWSWYIWLHATGLSLSFVI. Topologically, residues 239-242 are cytoplasmic; the sequence is STKY. The helical transmembrane segment at 243–263 threads the bilayer; the sequence is VGVMTYSAIGFAAVVNLWQLL. The Lumenal portion of the chain corresponds to 264–283; it reads DIKAGLSLRQFMRHFSKRLN. A helical transmembrane segment spans residues 284-304; sequence GLVLIPFVIYLFWFWVHFTVL. At 305 to 593 the chain is on the cytoplasmic side; that stretch reads NTSGPGDAFM…NGDEKKQIYF (289 aa). MIR domains lie at 331 to 391, 399 to 458, and 464 to 521; these read SKTV…VLPP, GQAV…FQPL, and GHVL…VDEI. Residues 594 to 614 traverse the membrane as a helical segment; sequence IGNIIGWWFQVISLAVFVGII. The Lumenal segment spans residues 615 to 635; it reads VADLITRHRGYYALNKMTREK. The chain crosses the membrane as a helical span at residues 636 to 656; sequence LYGPLMFFFVSWCCHYFPFFL. Residues 657 to 716 are Cytoplasmic-facing; sequence MARQKFLHHYLPAHLIACLFSGALWEVIFSDCKSLDLEKDEDISGASYERNPKVYVKPYT. A helical transmembrane segment spans residues 717-737; that stretch reads VFLVCVSCAVAWFFVYFSPLV. Topologically, residues 738 to 762 are lumenal; sequence YGDVSLSPSEVVSREWFDIELNFSK. Residue Asn759 is glycosylated (N-linked (GlcNAc...) asparagine).

The protein belongs to the glycosyltransferase 39 family. Forms a functional homodimer and may form a heterodimer with PMT6. Interacts with RCR1.

It is found in the endoplasmic reticulum membrane. It catalyses the reaction a di-trans,poly-cis-dolichyl beta-D-mannosyl phosphate + L-seryl-[protein] = 3-O-(alpha-D-mannosyl)-L-seryl-[protein] + a di-trans,poly-cis-dolichyl phosphate + H(+). The enzyme catalyses a di-trans,poly-cis-dolichyl beta-D-mannosyl phosphate + L-threonyl-[protein] = 3-O-(alpha-D-mannosyl)-L-threonyl-[protein] + a di-trans,poly-cis-dolichyl phosphate + H(+). Its pathway is protein modification; protein glycosylation. Functionally, protein O-mannosyltransferase involved in O-glycosylation which is essential for cell wall rigidity. Forms a homodimeric complex to transfer mannose from Dol-P-mannose to Ser or Thr residues on proteins. Specifically acts on secretory proteins with an ER-luminally oriented Ser/Thr-rich region flanked by a membrane anchor such as FUS1, AXL2, GAS1, KEX2, MID2, WSC1, WSC2, OPY2, PRM5, RAX2, or YNL176. The sequence is that of Dolichyl-phosphate-mannose--protein mannosyltransferase 4 from Saccharomyces cerevisiae (strain ATCC 204508 / S288c) (Baker's yeast).